The primary structure comprises 71 residues: Exodeoxyribonuclease 7 small subunit (71 aa).

Belongs to the XseB family. In terms of assembly, heterooligomer composed of large and small subunits.

It localises to the cytoplasm. The enzyme catalyses Exonucleolytic cleavage in either 5'- to 3'- or 3'- to 5'-direction to yield nucleoside 5'-phosphates.. Its function is as follows. Bidirectionally degrades single-stranded DNA into large acid-insoluble oligonucleotides, which are then degraded further into small acid-soluble oligonucleotides. This is Exodeoxyribonuclease 7 small subunit from Endomicrobium trichonymphae.